Consider the following 393-residue polypeptide: Glutamate 5-kinase 1 (393 aa).

Position 17 (lysine 17) interacts with ATP. Serine 57, aspartate 144, and asparagine 156 together coordinate substrate. ATP is bound at residue 176 to 177 (SD). Residues 282–359 (AGSLSIDAGA…AEIAAILGYA (78 aa)) enclose the PUA domain.

It belongs to the glutamate 5-kinase family.

It is found in the cytoplasm. The catalysed reaction is L-glutamate + ATP = L-glutamyl 5-phosphate + ADP. It participates in amino-acid biosynthesis; L-proline biosynthesis; L-glutamate 5-semialdehyde from L-glutamate: step 1/2. Catalyzes the transfer of a phosphate group to glutamate to form L-glutamate 5-phosphate. The protein is Glutamate 5-kinase 1 of Rhizobium meliloti (strain 1021) (Ensifer meliloti).